We begin with the raw amino-acid sequence, 394 residues long: Ceramide glucosyltransferase-B (394 aa).

Topologically, residues 1–10 (MAVLDLALQG) are lumenal. Residues 11–32 (LAIFGCILFFVLWFMHFLSIVY) form a helical membrane-spanning segment. Topologically, residues 33–195 (TRLHLNKKVS…QVYFGTSHPR (163 aa)) are cytoplasmic. D92 is a short sequence motif (D1). Residue D144 is a short sequence motif, D2. The helical transmembrane segment at 196–215 (SYISANVTGIKCVTGMSCLM) threads the bilayer. Topologically, residues 216–287 (RKEVLDQAGG…KLRINMLPAT (72 aa)) are lumenal. D236 is a short sequence motif (D3). The active-site Proton acceptor is D236. A (Q/R)XXRW motif is present at residues 272 to 276 (RMIRW). A helical membrane pass occupies residues 288–304 (IICEPISECFVASLIIG). At 305-309 (WAAHH) the chain is on the cytoplasmic side. Residues 310 to 328 (IFRWDIMVFFMCHCLAWFI) form a helical membrane-spanning segment. Over 329–348 (FDYIQLRGVQGGPLNFSKLD) the chain is Lumenal. The helical transmembrane segment at 349 to 369 (YAVAWFIRESMTIYIFLSALW) threads the bilayer. Topologically, residues 370-394 (DPTISWRTGRYRLRCGGTAEEILDV) are cytoplasmic.

Belongs to the glycosyltransferase 2 family.

It localises to the golgi apparatus membrane. The catalysed reaction is an N-acylsphing-4-enine + UDP-alpha-D-glucose = a beta-D-glucosyl-(1&lt;-&gt;1')-N-acylsphing-4-enine + UDP + H(+). The enzyme catalyses UDP-alpha-D-xylose + an N-acylsphing-4-enine = a beta-D-xylosyl-(1&lt;-&gt;1')-N-acylsphing-4-enine + UDP + H(+). It carries out the reaction N-(9Z-octadecenoyl)-sphing-4-enine + UDP-alpha-D-xylose = beta-D-xylosyl-(1&lt;-&gt;1')-N-(9Z-octadecenoyl)-sphing-4-enine + UDP + H(+). Its pathway is lipid metabolism; sphingolipid metabolism. Its function is as follows. Participates in the initial step of the glucosylceramide-based glycosphingolipid/GSL synthetic pathway at the cytosolic surface of the Golgi. Catalyzes the transfer of glucose from UDP-glucose to ceramide to produce glucosylceramide/GlcCer (such as beta-D-glucosyl-(1&lt;-&gt;1')-N-acylsphing-4-enine). Glucosylceramide is the core component of glycosphingolipids/GSLs, amphipathic molecules consisting of a ceramide lipid moiety embedded in the outer leaflet of the membrane, linked to one of hundreds of different externally oriented oligosaccharide structures. Glycosphingolipids are essential components of membrane microdomains that mediate membrane trafficking and signal transduction. They are implicated in many fundamental cellular processes, including growth, differentiation, migration, morphogenesis, cell-to-cell and cell-to-matrix interactions. Catalyzes the synthesis of xylosylceramide/XylCer (such as beta-D-xylosyl-(1&lt;-&gt;1')-N-acylsphing-4-enine) using UDP-Xyl as xylose donor. This is Ceramide glucosyltransferase-B (ugcg-b) from Xenopus laevis (African clawed frog).